The sequence spans 106 residues: Large ribosomal subunit protein bL21 (106 aa).

It belongs to the bacterial ribosomal protein bL21 family. Part of the 50S ribosomal subunit. Contacts protein L20.

In terms of biological role, this protein binds to 23S rRNA in the presence of protein L20. This chain is Large ribosomal subunit protein bL21, found in Xanthomonas euvesicatoria pv. vesicatoria (strain 85-10) (Xanthomonas campestris pv. vesicatoria).